Here is a 185-residue protein sequence, read N- to C-terminus: V-type ATP synthase subunit E (185 aa).

Belongs to the V-ATPase E subunit family.

Its function is as follows. Produces ATP from ADP in the presence of a proton gradient across the membrane. This is V-type ATP synthase subunit E from Deinococcus geothermalis (strain DSM 11300 / CIP 105573 / AG-3a).